Consider the following 515-residue polypeptide: Vacuolar segregation protein PEP7 (515 aa).

The C2H2-type zinc finger occupies 6–29; the sequence is VSCPICLRKFDNLQALNAHLDVEH. The interval 36 to 58 is disordered; sequence DSLGSNDSRLVNGKQKKARSVDS. The FYVE-type 1; atypical zinc-finger motif lies at 72 to 137; it reads KKGKSCCHTC…CCHDCFVTKP (66 aa). Cysteine 78, cysteine 81, cysteine 94, cysteine 97, cysteine 102, histidine 105, cysteine 129, cysteine 132, cysteine 221, cysteine 224, cysteine 237, cysteine 240, cysteine 245, cysteine 252, cysteine 289, and cysteine 292 together coordinate Zn(2+). The FYVE-type 2 zinc finger occupies 215–297; sequence DRSVLFCNIC…LCSHCIDMLF (83 aa).

In terms of assembly, interacts with VPS21, VPS45, PEP3 and PEP5.

It localises to the vacuole membrane. Required for vacuole segregation and vacuole protein sorting. Possibly part of a complex which tethers the vacuole membrane to microtubules, either directly or via kinesin or dynein-like motor proteins. Probably functions in several interorganelle traffic pathways. This is Vacuolar segregation protein PEP7 (PEP7) from Saccharomyces cerevisiae (strain ATCC 204508 / S288c) (Baker's yeast).